The sequence spans 165 residues: uncharacterized protein (165 aa).

Residues 7-29 traverse the membrane as a helical segment; that stretch reads YPLIFTAFLLIAFCLIFFSYHLI.

It is found in the membrane. This is an uncharacterized protein from Bacillus subtilis (strain 168).